The primary structure comprises 272 residues: Undecaprenyl-diphosphatase (272 aa).

8 consecutive transmembrane segments (helical) span residues Phe-4–Ile-24, Gly-43–Tyr-63, Ile-86–Ile-106, Val-109–Trp-129, Ile-145–Thr-165, Thr-186–Ile-206, Val-222–Val-242, and Val-249–Asn-269.

It belongs to the UppP family.

It is found in the cell inner membrane. The catalysed reaction is di-trans,octa-cis-undecaprenyl diphosphate + H2O = di-trans,octa-cis-undecaprenyl phosphate + phosphate + H(+). In terms of biological role, catalyzes the dephosphorylation of undecaprenyl diphosphate (UPP). Confers resistance to bacitracin. This is Undecaprenyl-diphosphatase from Acinetobacter baumannii (strain SDF).